Consider the following 284-residue polypeptide: Undecaprenyl-diphosphatase 2 (284 aa).

A run of 7 helical transmembrane segments spans residues 6 to 26 (VIFILKSVIIAIVEGLTEFIP), 46 to 66 (FAEMFEVVIQLGAILAVVVLY), 94 to 114 (FGMNVIIGCIPFAIIGVLFYD), 119 to 139 (LFNLQSVIIGFIVGGILLLVV), 183 to 203 (IMGGWIAGLNSPTAAEFSFFL), 227 to 247 (TLWIALVVGFIVAFIVSIIVM), and 262 to 282 (FAVYRIIMGVVLAVLAFTNII).

Belongs to the UppP family.

The protein resides in the cell membrane. It catalyses the reaction di-trans,octa-cis-undecaprenyl diphosphate + H2O = di-trans,octa-cis-undecaprenyl phosphate + phosphate + H(+). Functionally, catalyzes the dephosphorylation of undecaprenyl diphosphate (UPP). Confers resistance to bacitracin. In Clostridioides difficile (strain 630) (Peptoclostridium difficile), this protein is Undecaprenyl-diphosphatase 2.